The primary structure comprises 230 residues: Ureidoacrylate amidohydrolase RutB (230 aa).

The active-site Proton acceptor is the D24. The active site involves K133. The active-site Nucleophile is the C166.

The protein belongs to the isochorismatase family. RutB subfamily.

The catalysed reaction is (Z)-3-ureidoacrylate + H2O + H(+) = (Z)-3-aminoacrylate + NH4(+) + CO2. It catalyses the reaction (Z)-3-ureidoacrylate + H2O = (Z)-3-aminoacrylate + carbamate + H(+). It carries out the reaction (Z)-2-methylureidoacrylate + H2O + H(+) = (Z)-2-methylaminoacrylate + NH4(+) + CO2. Its function is as follows. Hydrolyzes ureidoacrylate to form aminoacrylate and carbamate. The carbamate hydrolyzes spontaneously, thereby releasing one of the nitrogen atoms of the pyrimidine ring as ammonia and one of its carbon atoms as CO2. The chain is Ureidoacrylate amidohydrolase RutB from Escherichia coli O150:H5 (strain SE15).